A 1224-amino-acid polypeptide reads, in one-letter code: DNA-directed RNA polymerase subunit beta' (1224 aa).

Zn(2+) is bound by residues C60, C62, C75, and C78. 3 residues coordinate Mg(2+): D449, D451, and D453. The Zn(2+) site is built by C819, C893, C900, and C903.

This sequence belongs to the RNA polymerase beta' chain family. As to quaternary structure, the RNAP catalytic core consists of 2 alpha, 1 beta, 1 beta' and 1 omega subunit. When a sigma factor is associated with the core the holoenzyme is formed, which can initiate transcription. Mg(2+) is required as a cofactor. It depends on Zn(2+) as a cofactor.

It catalyses the reaction RNA(n) + a ribonucleoside 5'-triphosphate = RNA(n+1) + diphosphate. DNA-dependent RNA polymerase catalyzes the transcription of DNA into RNA using the four ribonucleoside triphosphates as substrates. This Lactobacillus johnsonii (strain CNCM I-12250 / La1 / NCC 533) protein is DNA-directed RNA polymerase subunit beta'.